Here is a 158-residue protein sequence, read N- to C-terminus: Cytosine deaminase (158 aa).

In terms of domain architecture, CMP/dCMP-type deaminase spans 9 to 129 (KWDQKGMDIA…KYLQTRGHEV (121 aa)). A substrate-binding site is contributed by N51. A Zn(2+)-binding site is contributed by H62. The Proton donor role is filled by E64. Zn(2+) is bound by residues C91 and C94. Residue D155 participates in substrate binding.

It belongs to the cytidine and deoxycytidylate deaminase family. In terms of assembly, homodimer. Zn(2+) is required as a cofactor.

Its subcellular location is the cytoplasm. It is found in the nucleus. It catalyses the reaction cytosine + H2O + H(+) = uracil + NH4(+). The protein operates within pyrimidine metabolism; UMP biosynthesis via salvage pathway; uracil from cytosine: step 1/1. Functionally, catalyzes the hydrolytic deamination of cytosine to uracil or 5-methylcytosine to thymine. Is involved in the pyrimidine salvage pathway, which allows the cell to utilize cytosine for pyrimidine nucleotide synthesis. The chain is Cytosine deaminase from Saccharomyces cerevisiae (strain ATCC 204508 / S288c) (Baker's yeast).